We begin with the raw amino-acid sequence, 308 residues long: Ectoine dioxygenase (308 aa).

Gln131 serves as a coordination point for L-ectoine. Lys137 serves as a coordination point for 2-oxoglutarate. 3 residues coordinate Fe cation: His148, Asp150, and His249.

It belongs to the PhyH family. EctD subfamily. As to quaternary structure, homodimer. Fe(2+) serves as cofactor.

The enzyme catalyses L-ectoine + 2-oxoglutarate + O2 = 5-hydroxyectoine + succinate + CO2. Its function is as follows. Involved in the biosynthesis of 5-hydroxyectoine, called compatible solute, which helps organisms to survive extreme osmotic stress by acting as a highly soluble organic osmolyte. Catalyzes the 2-oxoglutarate-dependent selective hydroxylation of L-ectoine to yield (4S,5S)-5-hydroxyectoine. The chain is Ectoine dioxygenase from Bordetella bronchiseptica (strain ATCC BAA-588 / NCTC 13252 / RB50) (Alcaligenes bronchisepticus).